We begin with the raw amino-acid sequence, 618 residues long: Proline--tRNA ligase (618 aa).

This sequence belongs to the class-II aminoacyl-tRNA synthetase family. ProS type 1 subfamily. Homodimer.

It is found in the cytoplasm. The catalysed reaction is tRNA(Pro) + L-proline + ATP = L-prolyl-tRNA(Pro) + AMP + diphosphate. Its function is as follows. Catalyzes the attachment of proline to tRNA(Pro) in a two-step reaction: proline is first activated by ATP to form Pro-AMP and then transferred to the acceptor end of tRNA(Pro). As ProRS can inadvertently accommodate and process non-cognate amino acids such as alanine and cysteine, to avoid such errors it has two additional distinct editing activities against alanine. One activity is designated as 'pretransfer' editing and involves the tRNA(Pro)-independent hydrolysis of activated Ala-AMP. The other activity is designated 'posttransfer' editing and involves deacylation of mischarged Ala-tRNA(Pro). The misacylated Cys-tRNA(Pro) is not edited by ProRS. In Streptococcus pyogenes serotype M28 (strain MGAS6180), this protein is Proline--tRNA ligase.